A 774-amino-acid chain; its full sequence is Transforming acidic coiled-coil-containing protein 1 (774 aa).

At alanine 2 the chain carries N-acetylalanine. An interaction with LSM7 and SNRPG region spans residues alanine 2–serine 56. Residues serine 4, serine 10, and serine 45 each carry the phosphoserine modification. Positions alanine 21–histidine 142 are disordered. A compositionally biased stretch (acidic residues) spans glycine 28–glutamine 46. The span at glutamate 48–asparagine 61 shows a compositional bias: polar residues. The segment covering proline 88–aspartate 99 has biased composition (basic and acidic residues). Residues aspartate 113–valine 128 show a composition bias toward polar residues. The segment covering histidine 131–histidine 142 has biased composition (basic and acidic residues). A phosphoserine mark is found at serine 148 and serine 154. The interaction with TDRD7 stretch occupies residues phenylalanine 153–leucine 255. The segment at glutamate 207–aspartate 424 is interaction with YEATS4. Positions leucine 214–proline 428 are disordered. SPAZ domains lie at threonine 216–valine 294 and serine 354–glutamate 504. At serine 228 the chain carries Phosphoserine; by AURKC. Basic residues predominate over residues serine 228–lysine 241. 2 positions are modified to phosphoserine: serine 376 and serine 401. Polar residues predominate over residues isoleucine 397–lysine 407. The short motif at proline 452–lysine 468 is the Bipartite nuclear localization signal element. Residues serine 480 and serine 560 each carry the phosphoserine modification. Positions isoleucine 579 to aspartate 774 form a coiled coil. The segment at valine 670–aspartate 774 is interaction with CH-TOG.

The protein belongs to the TACC family. As to quaternary structure, interacts with CH-TOG and YEATS4. Interacts with the AURKA and AURKB and AURKC. Interacts with LSM7, TDRD7 and SNRPG. Interacts with GCN5L2 and PCAF. Interacts with the thyroid hormone receptors THRB and THRA, predominantly with isoform alpha-2. The interaction with THRA isoform alpha-1 and THRB is decreased in the presence of thyroid hormone T3. Interacts with RARA in the nucleus. Also interacts with other nuclear receptors, including ESR1, NR3C1, PPARG and RXRA, preferentially in the absence of their hormonal ligands.

It localises to the cytoplasm. The protein resides in the nucleus. Its subcellular location is the cytoskeleton. The protein localises to the microtubule organizing center. It is found in the centrosome. It localises to the midbody. Its function is as follows. Involved in transcription regulation induced by nuclear receptors, including in T3 thyroid hormone and all-trans retinoic acid pathways. Might promote the nuclear localization of the receptors. Likely involved in the processes that promote cell division prior to the formation of differentiated tissues. The protein is Transforming acidic coiled-coil-containing protein 1 (Tacc1) of Mus musculus (Mouse).